We begin with the raw amino-acid sequence, 203 residues long: ATP-dependent Clp protease proteolytic subunit 1 (203 aa).

Ser102 acts as the Nucleophile in catalysis. Residue His127 is part of the active site.

This sequence belongs to the peptidase S14 family. As to quaternary structure, fourteen ClpP subunits assemble into 2 heptameric rings which stack back to back to give a disk-like structure with a central cavity, resembling the structure of eukaryotic proteasomes.

Its subcellular location is the cytoplasm. The catalysed reaction is Hydrolysis of proteins to small peptides in the presence of ATP and magnesium. alpha-casein is the usual test substrate. In the absence of ATP, only oligopeptides shorter than five residues are hydrolyzed (such as succinyl-Leu-Tyr-|-NHMec, and Leu-Tyr-Leu-|-Tyr-Trp, in which cleavage of the -Tyr-|-Leu- and -Tyr-|-Trp bonds also occurs).. Functionally, cleaves peptides in various proteins in a process that requires ATP hydrolysis. Has a chymotrypsin-like activity. Plays a major role in the degradation of misfolded proteins. This is ATP-dependent Clp protease proteolytic subunit 1 from Rhizobium johnstonii (strain DSM 114642 / LMG 32736 / 3841) (Rhizobium leguminosarum bv. viciae).